We begin with the raw amino-acid sequence, 125 residues long: Small ribosomal subunit protein bS6m (125 aa).

The protein belongs to the bacterial ribosomal protein bS6 family. As to quaternary structure, component of the mitochondrial ribosome small subunit (28S) which comprises a 12S rRNA and about 30 distinct proteins.

Its subcellular location is the mitochondrion. This chain is Small ribosomal subunit protein bS6m (Mrps6), found in Mus musculus (Mouse).